A 572-amino-acid polypeptide reads, in one-letter code: E3 SUMO-protein ligase PIAS2 (572 aa).

Residues 11-45 form the SAP domain; the sequence is VSSFRVSELQVLLGFAGRNKSGRKHDLLMRALHLL. The LXXLL motif motif lies at 19 to 23; it reads LQVLL. Glycyl lysine isopeptide (Lys-Gly) (interchain with G-Cter in SUMO2) cross-links involve residues lysine 46 and lysine 249. Positions 134–299 constitute a PINIT domain; sequence QPSPPIPPVH…SMSVYLVRQL (166 aa). An SP-RING-type zinc finger spans residues 331–412; it reads PDSEIATTSL…FMEILNDCSD (82 aa). Zn(2+) is bound by residues cysteine 362, histidine 364, cysteine 385, and cysteine 388. Glycyl lysine isopeptide (Lys-Gly) (interchain with G-Cter in SUMO2) cross-links involve residues lysine 430, lysine 435, lysine 443, and lysine 452. The interval 467-473 is SUMO1-binding; it reads IDVIDLT. Serine 476, serine 477, and serine 478 each carry phosphoserine. The Nuclear localization signal motif lies at 484–492; the sequence is PPAKRKCIF. Residue lysine 489 forms a Glycyl lysine isopeptide (Lys-Gly) (interchain with G-Cter in SUMO2) linkage. Position 499 is a phosphoserine (serine 499). Lysine 502 is covalently cross-linked (Glycyl lysine isopeptide (Lys-Gly) (interchain with G-Cter in SUMO2)). A disordered region spans residues 523–572; sequence AAIPPSLTDYSVPFHHTPVSSMSSDLPGEQRRNDINNEVQLGTSSDTVQQ. Over residues 558 to 572 the composition is skewed to polar residues; that stretch reads NNEVQLGTSSDTVQQ.

Belongs to the PIAS family. In terms of assembly, binds SUMO1 and UBE2I. Interacts with AXIN1, JUN, MDM2, PARK7, TP53 and TP73 isoform alpha, but not TP73 isoform beta. Interacts with STAT4 following IL12 and IFN-alpha stimulation of T-cells. Interacts also with GTF2I, GTF2IRD1, IKFZ1, DAB2 and MSX2, as well as with several steroid receptors, including ESR1, ESR2, NR3C1, PGR, AR, and with NCOA2. Sumoylation of a target protein seems to enhance the interaction. Binds to sumoylated ELK1. Binds DNA, such as CDKN1A promoter, in a sequence-specific manner. Interacts with PLAG1. Interacts with KLF8; the interaction results in SUMO ligation and repression of KLF8 transcriptional activity and of its cell cycle progression into G(1) phase. Interacts with IFIH1/MDA5. Interacts with PML. Interacts with PRDM1. Sumoylated. In terms of tissue distribution, mainly expressed in testis.

It localises to the nucleus speckle. It is found in the nucleus. The protein resides in the PML body. Its pathway is protein modification; protein sumoylation. Functionally, functions as an E3-type small ubiquitin-like modifier (SUMO) ligase, stabilizing the interaction between UBE2I and the substrate, and as a SUMO-tethering factor. Plays a crucial role as a transcriptional coregulation in various cellular pathways, including the STAT pathway, the p53 pathway and the steroid hormone signaling pathway. The effects of this transcriptional coregulation, transactivation or silencing may vary depending upon the biological context and PIAS2 isoform studied. However, it seems to be mostly involved in gene silencing. Binds to sumoylated ELK1 and enhances its transcriptional activity by preventing recruitment of HDAC2 by ELK1, thus reversing SUMO-mediated repression of ELK1 transactivation activity. Sumoylates PML at'Lys-65' and 'Lys-160'. The chain is E3 SUMO-protein ligase PIAS2 (Pias2) from Rattus norvegicus (Rat).